We begin with the raw amino-acid sequence, 735 residues long: Ribosomal protein S6 kinase alpha-1 (735 aa).

Phosphoserine is present on Ser-54. Residues 62-321 (FELLKVLGQG…AEEIKRHIFY (260 aa)) enclose the Protein kinase 1 domain. Residues 68-76 (LGQGSFGKV) and Lys-94 contribute to the ATP site. The active-site Proton acceptor is Asp-187. Residue Ser-221 is modified to Phosphoserine; by PDPK1. The residue at position 307 (Ser-307) is a Phosphoserine. In terms of domain architecture, AGC-kinase C-terminal spans 322 to 391 (STIDWNKLYR…VATGLMEDDS (70 aa)). Thr-359 carries the phosphothreonine modification. A Phosphoserine modification is found at Ser-363. 2 positions are modified to phosphoserine; by autocatalysis: Ser-369 and Ser-380. The 258-residue stretch at 418 to 675 (YIVKETIGVG…AKQVLQHPWI (258 aa)) folds into the Protein kinase 2 domain. Residues 424-432 (IGVGSYSVC) and Lys-447 each bind ATP. Catalysis depends on Asp-535, which acts as the Proton acceptor. Thr-573 carries the phosphothreonine modification. Residue Ser-732 is modified to Phosphoserine.

It belongs to the protein kinase superfamily. AGC Ser/Thr protein kinase family. S6 kinase subfamily. In terms of assembly, forms a complex with either MAPK1/ERK2 or MAPK3/ERK1 in quiescent cells. Transiently dissociates following mitogenic stimulation. Interacts with ETV1/ER81 and FGFR1. Requires Mg(2+) as cofactor. In terms of processing, activated by phosphorylation at Ser-221 by PDPK1. Autophosphorylated on Ser-380, as part of the activation process. May be phosphorylated at Thr-359 and Ser-363 by MAPK1/ERK2 and MAPK3/ERK1. N-terminal myristoylation results in an activated kinase in the absence of added growth factors.

The protein localises to the nucleus. The protein resides in the cytoplasm. The enzyme catalyses L-seryl-[protein] + ATP = O-phospho-L-seryl-[protein] + ADP + H(+). The catalysed reaction is L-threonyl-[protein] + ATP = O-phospho-L-threonyl-[protein] + ADP + H(+). With respect to regulation, upon extracellular signal or mitogen stimulation, phosphorylated at Thr-573 in the C-terminal kinase domain (CTKD) by MAPK1/ERK2 and MAPK3/ERK1. The activated CTKD then autophosphorylates Ser-380, allowing binding of PDPK1, which in turn phosphorylates Ser-221 in the N-terminal kinase domain (NTDK) leading to the full activation of the protein and subsequent phosphorylation of the substrates by the NTKD. Serine/threonine-protein kinase that acts downstream of ERK (MAPK1/ERK2 and MAPK3/ERK1) signaling and mediates mitogenic and stress-induced activation of the transcription factors CREB1, ETV1/ER81 and NR4A1/NUR77, regulates translation through RPS6 and EIF4B phosphorylation, and mediates cellular proliferation, survival, and differentiation by modulating mTOR signaling and repressing pro-apoptotic function of BAD and DAPK1. In fibroblast, is required for EGF-stimulated phosphorylation of CREB1, which results in the subsequent transcriptional activation of several immediate-early genes. In response to mitogenic stimulation (EGF and PMA), phosphorylates and activates NR4A1/NUR77 and ETV1/ER81 transcription factors and the cofactor CREBBP. Upon insulin-derived signal, acts indirectly on the transcription regulation of several genes by phosphorylating GSK3B at 'Ser-9' and inhibiting its activity. Phosphorylates RPS6 in response to serum or EGF via an mTOR-independent mechanism and promotes translation initiation by facilitating assembly of the pre-initiation complex. In response to insulin, phosphorylates EIF4B, enhancing EIF4B affinity for the EIF3 complex and stimulating cap-dependent translation. Is involved in the mTOR nutrient-sensing pathway by directly phosphorylating TSC2 at 'Ser-1798', which potently inhibits TSC2 ability to suppress mTOR signaling, and mediates phosphorylation of RPTOR, which regulates mTORC1 activity and may promote rapamycin-sensitive signaling independently of the PI3K/AKT pathway. Also involved in feedback regulation of mTORC1 and mTORC2 by phosphorylating DEPTOR. Mediates cell survival by phosphorylating the pro-apoptotic proteins BAD and DAPK1 and suppressing their pro-apoptotic function. Promotes the survival of hepatic stellate cells by phosphorylating CEBPB in response to the hepatotoxin carbon tetrachloride (CCl4). Mediates induction of hepatocyte prolifration by TGFA through phosphorylation of CEBPB. Is involved in cell cycle regulation by phosphorylating the CDK inhibitor CDKN1B, which promotes CDKN1B association with 14-3-3 proteins and prevents its translocation to the nucleus and inhibition of G1 progression. Phosphorylates EPHA2 at 'Ser-897', the RPS6KA-EPHA2 signaling pathway controls cell migration. In response to mTORC1 activation, phosphorylates EIF4B at 'Ser-406' and 'Ser-422' which stimulates bicarbonate cotransporter SLC4A7 mRNA translation, increasing SLC4A7 protein abundance and function. The protein is Ribosomal protein S6 kinase alpha-1 (Rps6ka1) of Rattus norvegicus (Rat).